A 1018-amino-acid polypeptide reads, in one-letter code: Cell wall protein 1 (1018 aa).

An N-terminal signal peptide occupies residues Met1–Ala17. The region spanning Asn32–Val143 is the CFEM 1 domain. 4 cysteine pairs are disulfide-bonded: Cys60–Cys100, Cys64–Cys95, Cys74–Cys81, and Cys83–Cys116. Asp78 serves as a coordination point for heme. The disordered stretch occupies residues Ser147–Ile227. Residues Glu148–Val164 are compositionally biased toward polar residues. The span at Glu165–Glu221 shows a compositional bias: low complexity. 2 consecutive CFEM domains span residues Asn223 to Val334 and Ser393 to Val504. Cystine bridges form between Cys251/Cys291, Cys255/Cys286, Cys265/Cys272, and Cys274/Cys307. Residue Asp269 coordinates heme. The interval Ser338–Ser396 is disordered. 4 cysteine pairs are disulfide-bonded: Cys421-Cys461, Cys425-Cys456, Cys435-Cys442, and Cys444-Cys477. Asp439 is a heme binding site. Residues Ser507 to Tyr557 form a disordered region. Over residues Ser509 to Glu553 the composition is skewed to low complexity. The region spanning Asn555–Val666 is the CFEM 4 domain. 4 disulfide bridges follow: Cys583-Cys623, Cys587-Cys618, Cys597-Cys604, and Cys606-Cys639. Asp601 serves as a coordination point for heme. Residues Ser677–Ser785 form a disordered region. The span at Ser690–Ser766 shows a compositional bias: low complexity. Asn698, Asn708, Asn718, Asn729, Asn743, Asn753, Asn769, Asn798, and Asn965 each carry an N-linked (GlcNAc...) asparagine glycan. The span at Tyr767–Ser785 shows a compositional bias: polar residues. Ser989 carries GPI-anchor amidated serine lipidation. The propeptide at Val990 to Ile1018 is removed in mature form.

Belongs to the RBT5 family. In terms of processing, the GPI-anchor is attached to the protein in the endoplasmic reticulum and serves to target the protein to the cell surface. There, the glucosamine-inositol phospholipid moiety is cleaved off and the GPI-modified mannoprotein is covalently attached via its lipidless GPI glycan remnant to the 1,6-beta-glucan of the outer cell wall layer.

It localises to the secreted. It is found in the cell wall. The protein resides in the membrane. Heme-binding protein involved in heme-iron utilization. The ability to acquire iron from host tissues is a major virulence factor of pathogenic microorganisms. Required for biofilm formation. This chain is Cell wall protein 1 (CSA1), found in Candida albicans (strain SC5314 / ATCC MYA-2876) (Yeast).